Here is a 1903-residue protein sequence, read N- to C-terminus: Plexin-A4 (1903 aa).

An N-terminal signal peptide occupies residues 1–26 (MAFHNRRWNFTFSCCVVVLLLPLVAA). The Sema domain maps to 27–515 (RPQQPSAATR…SESQLTRVPV (489 aa)). The Extracellular portion of the chain corresponds to 27–1246 (RPQQPSAATR…ITSDSPLSST (1220 aa)). 2 disulfide bridges follow: C97-C106 and C132-C140. N166 carries an N-linked (GlcNAc...) asparagine glycan. Disulfide bonds link C291–C413, C307–C364, and C382–C401. N450 carries an N-linked (GlcNAc...) asparagine glycan. Residues 517 to 567 (ACEQYSSCNECLGSGDPHCGWCVLHSMCTRKEKCERSSEPRRFASNIKQCV) form the PSI 1 domain. 4 cysteine pairs are disulfide-bonded: C518-C535, C524-C566, C527-C544, and C538-C550. N-linked (GlcNAc...) asparagine glycans are attached at residues N575 and N600. C601 and C620 are joined by a disulfide. N-linked (GlcNAc...) asparagine glycans are attached at residues N656, N663, N764, and N772. Positions 663–710 (NCSVHKSCLSCVGSPYQCHWCKYRHTCTHDPSSCSFQEGRVKQPEECP) constitute a PSI 2 domain. The region spanning 811–864 (KCDARRESCGLCLKADPLFGCVWCKGENRCSLKQHCSYPQSMWLEHNGINSKCT) is the PSI 3 domain. 4 consecutive IPT/TIG domains span residues 866–960 (PRIT…YYFV), 962–1046 (PQLL…FEYV), 1049–1148 (PTIT…FVYY), and 1151–1246 (PVFE…LSST). N-linked (GlcNAc...) asparagine glycans are attached at residues N981, N992, N1025, N1141, N1189, and N1214. The helical transmembrane segment at 1247–1267 (AVISIAGAGGLLIFFIVIVLI) threads the bilayer. Residues 1268–1903 (AYKRKSRESD…QVVAFMSLES (636 aa)) are Cytoplasmic-facing.

The protein belongs to the plexin family.

It localises to the cell membrane. Its function is as follows. Involved in the development of primary sensory neurons especially in branching of the peripheral axons. Interacts with the SLIT2 signaling specifically to promote axonal branching of Rohon-Beard neurons and the trigeminal sensory ganglion neurons. The sequence is that of Plexin-A4 (plxna4) from Danio rerio (Zebrafish).